Reading from the N-terminus, the 371-residue chain is Dihydroorotate dehydrogenase (quinone) (371 aa).

FMN-binding positions include 79–83 and threonine 103; that span reads AGFDK. Lysine 83 contacts substrate. 128-132 contributes to the substrate binding site; that stretch reads NRMGF. Positions 156 and 189 each coordinate FMN. Substrate is bound at residue asparagine 189. Serine 192 acts as the Nucleophile in catalysis. Asparagine 194 serves as a coordination point for substrate. Positions 225 and 253 each coordinate FMN. Residue 254–255 coordinates substrate; it reads NT. Residues glycine 279, glycine 308, and 329–330 each bind FMN; that span reads YT.

It belongs to the dihydroorotate dehydrogenase family. Type 2 subfamily. Monomer. FMN is required as a cofactor.

It is found in the cell membrane. The enzyme catalyses (S)-dihydroorotate + a quinone = orotate + a quinol. Its pathway is pyrimidine metabolism; UMP biosynthesis via de novo pathway; orotate from (S)-dihydroorotate (quinone route): step 1/1. Functionally, catalyzes the conversion of dihydroorotate to orotate with quinone as electron acceptor. The protein is Dihydroorotate dehydrogenase (quinone) of Corynebacterium glutamicum (strain R).